A 571-amino-acid polypeptide reads, in one-letter code: Proline--tRNA ligase (571 aa).

The protein belongs to the class-II aminoacyl-tRNA synthetase family. ProS type 1 subfamily. As to quaternary structure, homodimer.

It is found in the cytoplasm. It catalyses the reaction tRNA(Pro) + L-proline + ATP = L-prolyl-tRNA(Pro) + AMP + diphosphate. In terms of biological role, catalyzes the attachment of proline to tRNA(Pro) in a two-step reaction: proline is first activated by ATP to form Pro-AMP and then transferred to the acceptor end of tRNA(Pro). As ProRS can inadvertently accommodate and process non-cognate amino acids such as alanine and cysteine, to avoid such errors it has two additional distinct editing activities against alanine. One activity is designated as 'pretransfer' editing and involves the tRNA(Pro)-independent hydrolysis of activated Ala-AMP. The other activity is designated 'posttransfer' editing and involves deacylation of mischarged Ala-tRNA(Pro). The misacylated Cys-tRNA(Pro) is not edited by ProRS. The polypeptide is Proline--tRNA ligase (Ligilactobacillus salivarius (strain UCC118) (Lactobacillus salivarius)).